Reading from the N-terminus, the 320-residue chain is Ferrochelatase (320 aa).

His-194 and Glu-275 together coordinate Fe cation.

The protein belongs to the ferrochelatase family. Monomer.

It is found in the cytoplasm. It catalyses the reaction heme b + 2 H(+) = protoporphyrin IX + Fe(2+). The protein operates within porphyrin-containing compound metabolism; protoheme biosynthesis; protoheme from protoporphyrin-IX: step 1/1. In terms of biological role, catalyzes the ferrous insertion into protoporphyrin IX. The protein is Ferrochelatase of Escherichia coli O139:H28 (strain E24377A / ETEC).